The chain runs to 159 residues: 2-C-methyl-D-erythritol 2,4-cyclodiphosphate synthase (159 aa).

Residues aspartate 8 and histidine 10 each coordinate a divalent metal cation. 4-CDP-2-C-methyl-D-erythritol 2-phosphate-binding positions include 8-10 (DVH) and 34-35 (HS). Histidine 42 contacts a divalent metal cation. Residues 56–58 (DIG), 61–65 (FPDTD), 100–106 (AQAPRML), 132–135 (TTTE), phenylalanine 139, and arginine 142 each bind 4-CDP-2-C-methyl-D-erythritol 2-phosphate.

This sequence belongs to the IspF family. In terms of assembly, homotrimer. It depends on a divalent metal cation as a cofactor.

It carries out the reaction 4-CDP-2-C-methyl-D-erythritol 2-phosphate = 2-C-methyl-D-erythritol 2,4-cyclic diphosphate + CMP. It functions in the pathway isoprenoid biosynthesis; isopentenyl diphosphate biosynthesis via DXP pathway; isopentenyl diphosphate from 1-deoxy-D-xylulose 5-phosphate: step 4/6. Its function is as follows. Involved in the biosynthesis of isopentenyl diphosphate (IPP) and dimethylallyl diphosphate (DMAPP), two major building blocks of isoprenoid compounds. Catalyzes the conversion of 4-diphosphocytidyl-2-C-methyl-D-erythritol 2-phosphate (CDP-ME2P) to 2-C-methyl-D-erythritol 2,4-cyclodiphosphate (ME-CPP) with a corresponding release of cytidine 5-monophosphate (CMP). The polypeptide is 2-C-methyl-D-erythritol 2,4-cyclodiphosphate synthase (Escherichia coli O6:K15:H31 (strain 536 / UPEC)).